The sequence spans 237 residues: 1-(5-phosphoribosyl)-5-[(5-phosphoribosylamino)methylideneamino] imidazole-4-carboxamide isomerase (237 aa).

Catalysis depends on aspartate 8, which acts as the Proton acceptor. Aspartate 129 (proton donor) is an active-site residue.

This sequence belongs to the HisA/HisF family.

It localises to the cytoplasm. It carries out the reaction 1-(5-phospho-beta-D-ribosyl)-5-[(5-phospho-beta-D-ribosylamino)methylideneamino]imidazole-4-carboxamide = 5-[(5-phospho-1-deoxy-D-ribulos-1-ylimino)methylamino]-1-(5-phospho-beta-D-ribosyl)imidazole-4-carboxamide. Its pathway is amino-acid biosynthesis; L-histidine biosynthesis; L-histidine from 5-phospho-alpha-D-ribose 1-diphosphate: step 4/9. The polypeptide is 1-(5-phosphoribosyl)-5-[(5-phosphoribosylamino)methylideneamino] imidazole-4-carboxamide isomerase (Methanosphaera stadtmanae (strain ATCC 43021 / DSM 3091 / JCM 11832 / MCB-3)).